The primary structure comprises 83 residues: uncharacterized protein (83 aa).

2 helical membrane-spanning segments follow: residues 23-43 (GGCY…SAIA) and 49-69 (SLWW…VVYG).

The protein localises to the cell membrane. This is an uncharacterized protein from Mycobacterium tuberculosis (strain CDC 1551 / Oshkosh).